The sequence spans 488 residues: Centrosomal protein cep57l1 (488 aa).

A coiled-coil region spans residues 71 to 226 (LESEKTHARD…AQVQTSLEVN (156 aa)). Disordered regions lie at residues 232-272 (SASS…PPSK) and 311-342 (PRVS…LMSS). The segment covering 241-250 (RKVKKKKQSK) has biased composition (basic residues). Basic and acidic residues-rich tracts occupy residues 259 to 270 (PSSKEPLSKEPP) and 314 to 325 (SQKDPKTVEHKP). Residues 377 to 403 (KNTDMREDLERELDYLVKQMEIKSDQI) are a coiled coil. A disordered region spans residues 416–464 (LKKTAKKQPRPPSTTKPAEDEQNIGATDPCTPRNKGNLANGTGTPNSKA). Over residues 452-464 (NLANGTGTPNSKA) the composition is skewed to polar residues.

This sequence belongs to the translokin family. In terms of assembly, interacts with clip1, mis12, ndc80 and zwint. Interacts with gamma-tubulin.

It is found in the cytoplasm. Its subcellular location is the cytoskeleton. The protein localises to the microtubule organizing center. It localises to the centrosome. The protein resides in the chromosome. It is found in the centromere. Its subcellular location is the kinetochore. The protein localises to the spindle. Its function is as follows. Required for spindle microtubule attachment to both kinetochores and centrosomes. Also functions to tether minus-ends of spindle microtubules to centrosomes. May act by forming ring-like structures around microtubules, or by serving as a cross-linker or scaffold at the attachment site. The polypeptide is Centrosomal protein cep57l1 (cep57l1) (Xenopus laevis (African clawed frog)).